We begin with the raw amino-acid sequence, 333 residues long: Adenosine deaminase (333 aa).

His-12 and His-14 together coordinate Zn(2+). Positions 14 and 16 each coordinate substrate. Pentostatin is bound by residues 14 to 16 (HLD), Ser-141, and Gly-170. Gly-170 is a binding site for substrate. Residue His-197 participates in Zn(2+) binding. Pentostatin-binding residues include Glu-200, His-221, and Asp-278. Glu-200 (proton donor) is an active-site residue. Zn(2+) is bound at residue Asp-278. Asp-279 contributes to the substrate binding site.

It belongs to the metallo-dependent hydrolases superfamily. Adenosine and AMP deaminases family. Adenosine deaminase subfamily. Zn(2+) is required as a cofactor.

The enzyme catalyses adenosine + H2O + H(+) = inosine + NH4(+). It catalyses the reaction 2'-deoxyadenosine + H2O + H(+) = 2'-deoxyinosine + NH4(+). Catalyzes the hydrolytic deamination of adenosine and 2-deoxyadenosine. This Salmonella typhimurium (strain LT2 / SGSC1412 / ATCC 700720) protein is Adenosine deaminase.